The chain runs to 637 residues: Threonine--tRNA ligase (637 aa).

The TGS domain occupies 1–61; it reads MLNITLPDGS…VEDSAVQIIT (61 aa). Residues 242 to 533 are catalytic; sequence DHRKLGKQLD…LIENHAGSFP (292 aa). Zn(2+) is bound by residues Cys333, His384, and His510.

The protein belongs to the class-II aminoacyl-tRNA synthetase family. Homodimer. Zn(2+) serves as cofactor.

It is found in the cytoplasm. It carries out the reaction tRNA(Thr) + L-threonine + ATP = L-threonyl-tRNA(Thr) + AMP + diphosphate + H(+). Catalyzes the attachment of threonine to tRNA(Thr) in a two-step reaction: L-threonine is first activated by ATP to form Thr-AMP and then transferred to the acceptor end of tRNA(Thr). Also edits incorrectly charged L-seryl-tRNA(Thr). This is Threonine--tRNA ligase from Neisseria meningitidis serogroup B (strain ATCC BAA-335 / MC58).